A 313-amino-acid chain; its full sequence is MQRRHFLQKTLLALPIIFSGNLLTGCKTNLSDDYLPDDKITNNPNLLQNKLKEILPIWENKFNAKIGMTIIADNGELSSHRGNEYFPVNSTIKAFIASHILLLVDKEKLDLNEKIIIKESDLIEYSPVCKKYFDENKPISISELCEATITLSDNGSANILLDKIGGLTAFNQFLKEIGADMVLANNEPLLNRSHYGETSDTAKPIPYTKSLKALIVGNILSNQSKEQLITWLINDKVADNLLRKYLPKNWRIGDKTGTGSESKNIIAVIWNENNKPYFISLFITQPHDGKSLDFKNQKDEIMAQIGKEIYPFL.

The first 25 residues, M1–G25, serve as a signal peptide directing secretion. The N-palmitoyl cysteine moiety is linked to residue C26. C26 is lipidated: S-diacylglycerol cysteine. Catalysis depends on S90, which acts as the Acyl-ester intermediate. K255–G257 provides a ligand contact to substrate.

It belongs to the class-A beta-lactamase family.

The protein resides in the cell membrane. It carries out the reaction a beta-lactam + H2O = a substituted beta-amino acid. This is Beta-lactamase BRO-1 (bla) from Moraxella catarrhalis (Branhamella catarrhalis).